The primary structure comprises 427 residues: 3-phosphoshikimate 1-carboxyvinyltransferase (427 aa).

3 residues coordinate 3-phosphoshikimate: Lys22, Ser23, and Arg27. Lys22 lines the phosphoenolpyruvate pocket. Residues Gly96 and Arg124 each coordinate phosphoenolpyruvate. Positions 169, 170, 171, 197, 313, 336, and 340 each coordinate 3-phosphoshikimate. Gln171 contributes to the phosphoenolpyruvate binding site. Catalysis depends on Asp313, which acts as the Proton acceptor. The phosphoenolpyruvate site is built by Arg344, Arg386, and Lys411.

Belongs to the EPSP synthase family. As to quaternary structure, monomer.

It localises to the cytoplasm. It carries out the reaction 3-phosphoshikimate + phosphoenolpyruvate = 5-O-(1-carboxyvinyl)-3-phosphoshikimate + phosphate. It participates in metabolic intermediate biosynthesis; chorismate biosynthesis; chorismate from D-erythrose 4-phosphate and phosphoenolpyruvate: step 6/7. Functionally, catalyzes the transfer of the enolpyruvyl moiety of phosphoenolpyruvate (PEP) to the 5-hydroxyl of shikimate-3-phosphate (S3P) to produce enolpyruvyl shikimate-3-phosphate and inorganic phosphate. This is 3-phosphoshikimate 1-carboxyvinyltransferase from Salmonella dublin (strain CT_02021853).